Reading from the N-terminus, the 164-residue chain is Large ribosomal subunit protein bL21 (164 aa).

Residues Lys-105–Glu-164 are disordered. Positions Ala-133–Glu-164 are enriched in basic residues.

The protein belongs to the bacterial ribosomal protein bL21 family. Part of the 50S ribosomal subunit. Contacts protein L20.

In terms of biological role, this protein binds to 23S rRNA in the presence of protein L20. This Afipia carboxidovorans (strain ATCC 49405 / DSM 1227 / KCTC 32145 / OM5) (Oligotropha carboxidovorans) protein is Large ribosomal subunit protein bL21.